The following is a 381-amino-acid chain: Probable G-protein coupled receptor 34 (381 aa).

The Extracellular portion of the chain corresponds to 1-61; that stretch reads MRSHTITMTT…LLSTVLTTSY (61 aa). N28, N36, and N42 each carry an N-linked (GlcNAc...) asparagine glycan. The chain crosses the membrane as a helical span at residues 62 to 82; it reads SVIFIVGLVGNIIALYVFLGI. At 83–88 the chain is on the cytoplasmic side; that stretch reads HRKRNS. Residues 89 to 109 form a helical membrane-spanning segment; the sequence is IQIYLLNVAIADLLLIFCLPF. The Extracellular segment spans residues 110–128; it reads RIMYHINQNKWTLGVILCK. An intrachain disulfide couples C127 to C204. The chain crosses the membrane as a helical span at residues 129 to 149; sequence VVGTLFYMNMYISIILLGFIS. At 150 to 171 the chain is on the cytoplasmic side; that stretch reads LDRYIKINRSIQQRKAITTKQS. The helical transmembrane segment at 172–192 threads the bilayer; that stretch reads IYVCCIVWMLALGGFLTMIIL. Topologically, residues 193 to 216 are extracellular; the sequence is TLKKGGHNSTMCFHYRDKHNAKGE. N200 is a glycosylation site (N-linked (GlcNAc...) asparagine). Residues 217–237 traverse the membrane as a helical segment; the sequence is AIFNFILVVMFWLIFLLIILS. The Cytoplasmic portion of the chain corresponds to 238–269; that stretch reads YIKIGKNLLRISKRRSKFPNSGKYATTARNSF. A helical transmembrane segment spans residues 270–290; the sequence is IVLIIFTICFVPYHAFRFIYI. Topologically, residues 291–310 are extracellular; the sequence is SSQLNVSSCYWKEIVHKTNE. Residue N295 is glycosylated (N-linked (GlcNAc...) asparagine). Residues 311–331 traverse the membrane as a helical segment; it reads IMLVLSSFNSCLDPVMYFLMS. Topologically, residues 332–381 are cytoplasmic; it reads SNIRKIMCQLLFRRFQGEPSRSESTSEFKPGYSLHDTSVAVKIQSSSKST.

The protein belongs to the G-protein coupled receptor 1 family.

It is found in the cell membrane. Its function is as follows. G-protein-coupled receptor of lysophosphatidylserine (LysoPS) that plays different roles in immune response. Acts a damage-sensing receptor that triggers tissue repair upon recognition of dying neutrophils. Mechanistically, apoptotic neutrophils release lysophosphatydilserine that are recognized by type 3 innate lymphoid cells (ILC3s) via GPR34, which activates downstream PI3K-AKT and RAS-ERK signaling pathways leading to STAT3 activation and IL-22 production. Plays an important role in microglial function, controlling morphology and phagocytosis. The protein is Probable G-protein coupled receptor 34 (GPR34) of Gorilla gorilla gorilla (Western lowland gorilla).